The chain runs to 563 residues: Arginine--tRNA ligase (563 aa).

The short motif at 120–130 is the 'HIGH' region element; sequence PNIAKPFHIGH.

Belongs to the class-I aminoacyl-tRNA synthetase family. In terms of assembly, monomer.

It localises to the cytoplasm. The enzyme catalyses tRNA(Arg) + L-arginine + ATP = L-arginyl-tRNA(Arg) + AMP + diphosphate. In Clostridium botulinum (strain Okra / Type B1), this protein is Arginine--tRNA ligase.